Here is a 313-residue protein sequence, read N- to C-terminus: Ribosomal RNA small subunit methyltransferase H (313 aa).

S-adenosyl-L-methionine contacts are provided by residues 33-35 (GGH), Asp-53, Phe-80, Asp-101, and Gln-108. The tract at residues 282–313 (LVHNKPLTPSEAEIEQNPRARSAKLRVAQKLA) is disordered.

It belongs to the methyltransferase superfamily. RsmH family.

Its subcellular location is the cytoplasm. The enzyme catalyses cytidine(1402) in 16S rRNA + S-adenosyl-L-methionine = N(4)-methylcytidine(1402) in 16S rRNA + S-adenosyl-L-homocysteine + H(+). Specifically methylates the N4 position of cytidine in position 1402 (C1402) of 16S rRNA. The chain is Ribosomal RNA small subunit methyltransferase H from Magnetococcus marinus (strain ATCC BAA-1437 / JCM 17883 / MC-1).